A 514-amino-acid polypeptide reads, in one-letter code: Maturase K (514 aa).

It belongs to the intron maturase 2 family. MatK subfamily.

The protein localises to the plastid. The protein resides in the chloroplast. Its function is as follows. Usually encoded in the trnK tRNA gene intron. Probably assists in splicing its own and other chloroplast group II introns. The sequence is that of Maturase K from Phoenix dactylifera (Date palm).